The primary structure comprises 215 residues: Cytochrome c biogenesis ATP-binding export protein CcmA (215 aa).

In terms of domain architecture, ABC transporter spans 12 to 215 (LAAHALTYSR…TRLLHLQKAP (204 aa)). 44 to 51 (GPNGIGKT) contacts ATP.

It belongs to the ABC transporter superfamily. CcmA exporter (TC 3.A.1.107) family. In terms of assembly, the complex is composed of two ATP-binding proteins (CcmA) and two transmembrane proteins (CcmB).

It is found in the cell inner membrane. The enzyme catalyses heme b(in) + ATP + H2O = heme b(out) + ADP + phosphate + H(+). In terms of biological role, part of the ABC transporter complex CcmAB involved in the biogenesis of c-type cytochromes; once thought to export heme, this seems not to be the case, but its exact role is uncertain. Responsible for energy coupling to the transport system. The protein is Cytochrome c biogenesis ATP-binding export protein CcmA of Xylella fastidiosa (strain Temecula1 / ATCC 700964).